The sequence spans 139 residues: D-ribose pyranase (139 aa).

The active-site Proton donor is the His20. Substrate contacts are provided by residues Asp28, His106, and 128 to 130 (YAN).

It belongs to the RbsD / FucU family. RbsD subfamily. Homodecamer.

The protein localises to the cytoplasm. The catalysed reaction is beta-D-ribopyranose = beta-D-ribofuranose. It functions in the pathway carbohydrate metabolism; D-ribose degradation; D-ribose 5-phosphate from beta-D-ribopyranose: step 1/2. Functionally, catalyzes the interconversion of beta-pyran and beta-furan forms of D-ribose. This is D-ribose pyranase from Salmonella arizonae (strain ATCC BAA-731 / CDC346-86 / RSK2980).